Here is an 881-residue protein sequence, read N- to C-terminus: Alanine--tRNA ligase (881 aa).

The Zn(2+) site is built by His-564, His-568, Cys-666, and His-670.

This sequence belongs to the class-II aminoacyl-tRNA synthetase family. Zn(2+) serves as cofactor.

It is found in the cytoplasm. It catalyses the reaction tRNA(Ala) + L-alanine + ATP = L-alanyl-tRNA(Ala) + AMP + diphosphate. Its function is as follows. Catalyzes the attachment of alanine to tRNA(Ala) in a two-step reaction: alanine is first activated by ATP to form Ala-AMP and then transferred to the acceptor end of tRNA(Ala). Also edits incorrectly charged Ser-tRNA(Ala) and Gly-tRNA(Ala) via its editing domain. The protein is Alanine--tRNA ligase of Caldicellulosiruptor saccharolyticus (strain ATCC 43494 / DSM 8903 / Tp8T 6331).